We begin with the raw amino-acid sequence, 22 residues long: Brevinin-1OKa (22 aa).

At K22 the chain carries Lysine amide.

In terms of tissue distribution, expressed by the skin glands.

The protein resides in the secreted. Antimicrobial peptide. Active against Gram-negative bacterium E.coli (MIC=12.5 uM) and against Gram-positive bacterium S.aureus (MIC=12.5 uM). This chain is Brevinin-1OKa, found in Nidirana okinavana (Kampira Falls frog).